A 184-amino-acid chain; its full sequence is MKNVTDSFVSLGHWPSAGSFGFNTDILATNPINLSVVLGVLIFFGKGVLSDLLDNRKQRILNTIRNSEELRGGAIEQLEKARARLRKVEMEAEQFRVNGYSEIEQEKLNLINSTYKTLEQLENYKNETIHFEQQRAINQVRQRVFQQALQGALGTLNSCLNNELHLRTISANIGMFGAMKEITD.

Residues 27–49 (LATNPINLSVVLGVLIFFGKGVL) traverse the membrane as a helical segment.

Belongs to the ATPase B chain family. In terms of assembly, F-type ATPases have 2 components, F(1) - the catalytic core - and F(0) - the membrane proton channel. F(1) has five subunits: alpha(3), beta(3), gamma(1), delta(1), epsilon(1). F(0) has four main subunits: a(1), b(1), b'(1) and c(10-14). The alpha and beta chains form an alternating ring which encloses part of the gamma chain. F(1) is attached to F(0) by a central stalk formed by the gamma and epsilon chains, while a peripheral stalk is formed by the delta, b and b' chains.

Its subcellular location is the plastid. The protein resides in the chloroplast thylakoid membrane. Its function is as follows. F(1)F(0) ATP synthase produces ATP from ADP in the presence of a proton or sodium gradient. F-type ATPases consist of two structural domains, F(1) containing the extramembraneous catalytic core and F(0) containing the membrane proton channel, linked together by a central stalk and a peripheral stalk. During catalysis, ATP synthesis in the catalytic domain of F(1) is coupled via a rotary mechanism of the central stalk subunits to proton translocation. In terms of biological role, component of the F(0) channel, it forms part of the peripheral stalk, linking F(1) to F(0). In Eucalyptus globulus subsp. globulus (Tasmanian blue gum), this protein is ATP synthase subunit b, chloroplastic.